We begin with the raw amino-acid sequence, 468 residues long: F-box/LRR-repeat protein At4g14096 (468 aa).

The F-box domain maps to 7 to 60 (RDIISSLPEAISCHILSFLPTKEAASTSVLSKKWRYLFAFVPNLDLDESVYLNP). LRR repeat units follow at residues 114–136 (VSDLDLHVYMETEFVFPSEMFLS), 138–167 (TLVRLKLMLYPLLEFEDVYLPKLKTLYIDS), 169–194 (YFEKYGIGLTKLLSGCPILEDLVLDD), 216–241 (STQVRDEFPKSVSIDTPNLVYLKFTD), 292–323 (TLYLSSNTLQVLTYSCDAIPIFNNLTHLTIES), and 324–349 (NPEVGWQSLPGLLKNSPNLETLIFQG).

The chain is F-box/LRR-repeat protein At4g14096 from Arabidopsis thaliana (Mouse-ear cress).